Reading from the N-terminus, the 900-residue chain is MPQVDPELFDRGQFQAELALKSSPIAAFKKAIRQFREVLDNRFNSGRDIRRLIEDRAWCVDQILQQAWQRFDWGDDADIALVAVGGYGRGELHPYSDVDLLILLDSEDQESFREPIEGFLTLLWDIGLEVGQSVRSVQQCAEEARADLTVITTLMECRTICGPDSLRQRMLRVTGSAHMWPSKEFFLAKRHEQQRRHAKYNDTEYNLEPNVKGSPGGLRDIQTILWMARRQFGSLNLHALVREGFLVESECSMLASSQEFLWRVRYALHMLAGRAEDRLLFDHQRSIARLFGYEDNDVKLAVERFMQKYYRVVMAISELNDLIIQHFEEVILPCEQPVQIQPLNSRFQLRDGYIEVTHPNVFKRTPFALLEIFVLMAQHPEIKGVRADTIRLLRDSRHLIDDEFRHDIRNTSLFIELFKSSQGIHRNLRRMNRYGILGRYLPEFGHIIGQMQHDLFHIYTVDAHTLNLIKHLRKLNRPEMAEKYPLASKIIDRLPKPELIYIAGLYHDIAKGRGGDHSELGAVDAEAFCQSHQLPLWDTQLVSWLVQNHLVMSTTAQRKDLSDPQVIFDFAQLVGDQTHLDYLYVLTVADINATNPTLWNSWRASLLRQLYTETKRALRRGLENPVDREEQIRQTQTAALDQLVRNGIDQDDAEQLWSQLGDDYFLRHTAGDVAWHTEAILQHPDDGTPLVLIKETTQREFESGSQIFIYAADQHDFFAVTVAAMDQLNLSIQDARIITSTSQFTLDTYIVLDADGDSIGNNPERIAEIREGLIDALKNPDDYPTIIQRRVPRQLKHFAFAPQVTISTDALRQVSVLEVIAPDRPGLLARIGGIFLDFDLSVQNAKIATLGERVEDVFYITDARNQPLADPDLCKRLQAALVEQLSQDNGRDTLPTRINF.

A uridylyltransferase region spans residues 1-342 (MPQVDPELFD…PCEQPVQIQP (342 aa)). Positions 343–705 (LNSRFQLRDG…TTQREFESGS (363 aa)) are uridylyl-removing. The 123-residue stretch at 461-583 (VDAHTLNLIK…VGDQTHLDYL (123 aa)) folds into the HD domain. ACT domains lie at 706–789 (QIFI…IIQR) and 816–891 (VLEV…DNGR).

This sequence belongs to the GlnD family. The cofactor is Mg(2+).

The enzyme catalyses [protein-PII]-L-tyrosine + UTP = [protein-PII]-uridylyl-L-tyrosine + diphosphate. It carries out the reaction [protein-PII]-uridylyl-L-tyrosine + H2O = [protein-PII]-L-tyrosine + UMP + H(+). Uridylyltransferase (UTase) activity is inhibited by glutamine, while glutamine activates uridylyl-removing (UR) activity. Its function is as follows. Modifies, by uridylylation and deuridylylation, the PII regulatory proteins (GlnB and homologs), in response to the nitrogen status of the cell that GlnD senses through the glutamine level. Under low glutamine levels, catalyzes the conversion of the PII proteins and UTP to PII-UMP and PPi, while under higher glutamine levels, GlnD hydrolyzes PII-UMP to PII and UMP (deuridylylation). Thus, controls uridylylation state and activity of the PII proteins, and plays an important role in the regulation of nitrogen assimilation and metabolism. In Pseudomonas aeruginosa (strain LESB58), this protein is Bifunctional uridylyltransferase/uridylyl-removing enzyme.